We begin with the raw amino-acid sequence, 430 residues long: F-box protein At1g49990 (430 aa).

An F-box domain is found at 1-45; it reads METGRRRTIPEVEILARLPLRSIARFKSVCKRWKSVIESDYFRRL.

The polypeptide is F-box protein At1g49990 (Arabidopsis thaliana (Mouse-ear cress)).